Consider the following 190-residue polypeptide: Large ribosomal subunit protein bL25 (190 aa).

Belongs to the bacterial ribosomal protein bL25 family. CTC subfamily. As to quaternary structure, part of the 50S ribosomal subunit; part of the 5S rRNA/L5/L18/L25 subcomplex. Contacts the 5S rRNA. Binds to the 5S rRNA independently of L5 and L18.

In terms of biological role, this is one of the proteins that binds to the 5S RNA in the ribosome where it forms part of the central protuberance. The polypeptide is Large ribosomal subunit protein bL25 (Neisseria meningitidis serogroup A / serotype 4A (strain DSM 15465 / Z2491)).